A 156-amino-acid chain; its full sequence is Protein SprT (156 aa).

A SprT-like domain is found at 15–153 (NRYFNKHFTP…CKKCKEILVL (139 aa)). A Zn(2+)-binding site is contributed by histidine 67. Glutamate 68 is an active-site residue. A Zn(2+)-binding site is contributed by histidine 71.

Belongs to the SprT family. It depends on Zn(2+) as a cofactor.

It is found in the cytoplasm. The protein is Protein SprT of Glaesserella parasuis serovar 5 (strain SH0165) (Haemophilus parasuis).